Reading from the N-terminus, the 78-residue chain is Large ribosomal subunit protein eL38 (78 aa).

The protein belongs to the eukaryotic ribosomal protein eL38 family. Component of the large ribosomal subunit (LSU). Mature yeast ribosomes consist of a small (40S) and a large (60S) subunit. The 40S small subunit contains 1 molecule of ribosomal RNA (18S rRNA) and 33 different proteins (encoded by 57 genes). The large 60S subunit contains 3 rRNA molecules (25S, 5.8S and 5S rRNA) and 46 different proteins (encoded by 81 genes).

It localises to the cytoplasm. Functionally, component of the ribosome, a large ribonucleoprotein complex responsible for the synthesis of proteins in the cell. The small ribosomal subunit (SSU) binds messenger RNAs (mRNAs) and translates the encoded message by selecting cognate aminoacyl-transfer RNA (tRNA) molecules. The large subunit (LSU) contains the ribosomal catalytic site termed the peptidyl transferase center (PTC), which catalyzes the formation of peptide bonds, thereby polymerizing the amino acids delivered by tRNAs into a polypeptide chain. The nascent polypeptides leave the ribosome through a tunnel in the LSU and interact with protein factors that function in enzymatic processing, targeting, and the membrane insertion of nascent chains at the exit of the ribosomal tunnel. The sequence is that of Large ribosomal subunit protein eL38 from Saccharomyces cerevisiae (strain ATCC 204508 / S288c) (Baker's yeast).